The primary structure comprises 163 residues: Crossover junction endodeoxyribonuclease RuvC (163 aa).

Catalysis depends on residues Asp-7, Glu-67, and Asp-140. Residues Asp-7, Glu-67, and Asp-140 each contribute to the Mg(2+) site.

This sequence belongs to the RuvC family. As to quaternary structure, homodimer which binds Holliday junction (HJ) DNA. The HJ becomes 2-fold symmetrical on binding to RuvC with unstacked arms; it has a different conformation from HJ DNA in complex with RuvA. In the full resolvosome a probable DNA-RuvA(4)-RuvB(12)-RuvC(2) complex forms which resolves the HJ. It depends on Mg(2+) as a cofactor.

Its subcellular location is the cytoplasm. The enzyme catalyses Endonucleolytic cleavage at a junction such as a reciprocal single-stranded crossover between two homologous DNA duplexes (Holliday junction).. Functionally, the RuvA-RuvB-RuvC complex processes Holliday junction (HJ) DNA during genetic recombination and DNA repair. Endonuclease that resolves HJ intermediates. Cleaves cruciform DNA by making single-stranded nicks across the HJ at symmetrical positions within the homologous arms, yielding a 5'-phosphate and a 3'-hydroxyl group; requires a central core of homology in the junction. The consensus cleavage sequence is 5'-(A/T)TT(C/G)-3'. Cleavage occurs on the 3'-side of the TT dinucleotide at the point of strand exchange. HJ branch migration catalyzed by RuvA-RuvB allows RuvC to scan DNA until it finds its consensus sequence, where it cleaves and resolves the cruciform DNA. The protein is Crossover junction endodeoxyribonuclease RuvC of Desulforamulus reducens (strain ATCC BAA-1160 / DSM 100696 / MI-1) (Desulfotomaculum reducens).